The following is an 870-amino-acid chain: Importin subunit beta-1 (870 aa).

Ala2 carries the post-translational modification N-acetylalanine. HEAT repeat units follow at residues 4–33 (EVTQ…FQEQ), 35–67 (LAGF…KNAL), 87–126 (MSTK…ELPQ), 132–161 (LIVS…LCEE), 172–204 (VNKI…YMAL), 214–249 (DMER…IAST), 255–304 (AHYM…EFAG), 313–361 (FTKQ…RAVG), 365–395 (VPHV…GSIL), 403–440 (LMAI…IFEF), 456–492 (CQQI…EDIG), 498–535 (TPFF…EVVR), 542–588 (STMV…QVII), 596–637 (TKSK…AYAA), 642–679 (AKYM…CRAL), 684–722 (LPYC…ALAI), 730–776 (WRYS…FQGF), and 826–868 (SHVG…TRAI). The Importin N-terminal domain occupies 23–103 (AEESLKQFQE…RAFLLKTLSA (81 aa)).

This sequence belongs to the importin beta family. Importin beta-1 subfamily. In terms of assembly, forms a complex with the importin subunits alpha IMPA1 or IMPA2, the nucleoporin NUP62 and the Ran-GTP-binding proteins RAN1, RAN2 or RAN3. In terms of tissue distribution, expressed in roots, cotyledons, leaves, stems, petals, stamen, stigma, siliques, embryos and guard cells.

It localises to the cytoplasm. The protein resides in the nucleus. Its function is as follows. Acts as a negative effector of drought tolerance. Involved in the regulation of stomatal closure and in the abscisic acid (ABA)-mediated pathway that lead to drought tolerance. Does not directly mediate nuclear import of ABI1 and ABI2 which are key regulators of the ABA signaling pathway. May be involved in nuclear translocation of other type 2C protein phosphatases that mediate ABA signaling. The polypeptide is Importin subunit beta-1 (Arabidopsis thaliana (Mouse-ear cress)).